The primary structure comprises 374 residues: Pulmonary surfactant-associated protein D (374 aa).

Positions 1-19 (MLPFLSMLVLLVQPLGNLG) are cleaved as a signal peptide. An S-nitrosocysteine mark is found at Cys34 and Cys39. Positions 38 to 222 (MCSPTENGLP…GIKGESGLPD (185 aa)) are disordered. A Collagen-like domain is found at 45–221 (GLPGRDGRDG…RGIKGESGLP (177 aa)). Over residues 49–64 (RDGRDGREGPRGEKGD) the composition is skewed to basic and acidic residues. A compositionally biased stretch (low complexity) spans 70 to 79 (PMGLSGLQGP). Asn89 carries an N-linked (GlcNAc...) asparagine glycan. Composition is skewed to low complexity over residues 137–149 (KGEA…VGAP) and 169–200 (APGV…RGPP). Positions 203-215 (KGDRGVPGDRGIK) are enriched in basic and acidic residues. A coiled-coil region spans residues 222 to 253 (DSAALRQQMEALKGKLQRLEVAFSHYQKAALF). In terms of domain architecture, C-type lectin spans 259–374 (VGDKIFRTAD…GEQRLVICEF (116 aa)). Disulfide bonds link Cys280-Cys372 and Cys350-Cys364.

This sequence belongs to the SFTPD family. Oligomeric complex of 4 set of homotrimers. In terms of processing, S-nitrosylation at Cys-34 and Cys-39 alters the quaternary structure which results in a pro-inflammatory chemoattractive signaling activity with macrophages.

The protein localises to the secreted. It is found in the extracellular space. It localises to the extracellular matrix. Its subcellular location is the surface film. In terms of biological role, contributes to the lung's defense against inhaled microorganisms, organic antigens and toxins. Interacts with compounds such as bacterial lipopolysaccharides, oligosaccharides and fatty acids and modulates leukocyte action in immune response. May participate in the extracellular reorganization or turnover of pulmonary surfactant. Binds strongly maltose residues and to a lesser extent other alpha-glucosyl moieties. The protein is Pulmonary surfactant-associated protein D (Sftpd) of Mus musculus (Mouse).